Reading from the N-terminus, the 257-residue chain is Imidazole glycerol phosphate synthase subunit HisF (257 aa).

Catalysis depends on residues aspartate 12 and aspartate 131.

Belongs to the HisA/HisF family. As to quaternary structure, heterodimer of HisH and HisF.

It is found in the cytoplasm. It carries out the reaction 5-[(5-phospho-1-deoxy-D-ribulos-1-ylimino)methylamino]-1-(5-phospho-beta-D-ribosyl)imidazole-4-carboxamide + L-glutamine = D-erythro-1-(imidazol-4-yl)glycerol 3-phosphate + 5-amino-1-(5-phospho-beta-D-ribosyl)imidazole-4-carboxamide + L-glutamate + H(+). It participates in amino-acid biosynthesis; L-histidine biosynthesis; L-histidine from 5-phospho-alpha-D-ribose 1-diphosphate: step 5/9. Functionally, IGPS catalyzes the conversion of PRFAR and glutamine to IGP, AICAR and glutamate. The HisF subunit catalyzes the cyclization activity that produces IGP and AICAR from PRFAR using the ammonia provided by the HisH subunit. This Mycobacteroides abscessus (strain ATCC 19977 / DSM 44196 / CCUG 20993 / CIP 104536 / JCM 13569 / NCTC 13031 / TMC 1543 / L948) (Mycobacterium abscessus) protein is Imidazole glycerol phosphate synthase subunit HisF.